The chain runs to 548 residues: Chaperonin GroEL (548 aa).

Residues 30-33, Lys51, 87-91, Gly415, 479-481, and Asp495 contribute to the ATP site; these read TLGP, DGTTT, and NAA.

This sequence belongs to the chaperonin (HSP60) family. As to quaternary structure, forms a cylinder of 14 subunits composed of two heptameric rings stacked back-to-back. Interacts with the co-chaperonin GroES.

Its subcellular location is the cytoplasm. It catalyses the reaction ATP + H2O + a folded polypeptide = ADP + phosphate + an unfolded polypeptide.. In terms of biological role, together with its co-chaperonin GroES, plays an essential role in assisting protein folding. The GroEL-GroES system forms a nano-cage that allows encapsulation of the non-native substrate proteins and provides a physical environment optimized to promote and accelerate protein folding. This is Chaperonin GroEL from Salmonella gallinarum (strain 287/91 / NCTC 13346).